A 66-amino-acid chain; its full sequence is Ribosome biogenesis protein Nop10 (66 aa).

This sequence belongs to the NOP10 family.

In terms of biological role, involved in ribosome biogenesis; more specifically in 18S rRNA pseudouridylation and in cleavage of pre-rRNA. This chain is Ribosome biogenesis protein Nop10, found in Staphylothermus marinus (strain ATCC 43588 / DSM 3639 / JCM 9404 / F1).